Consider the following 205-residue polypeptide: Holliday junction branch migration complex subunit RuvA (205 aa).

The interval 1–62 is domain I; that stretch reads MFEYVTGYVE…EDIMALYGFK (62 aa). Positions 63-141 are domain II; sequence TREERLLFTK…DVVPDAFVDL (79 aa). Residues 142–152 form a flexible linker region; the sequence is FSDTERFDEKK. The tract at residues 153 to 205 is domain III; it reads GTSAELDEALEALRALGYAEREVSRVVPELLKESLTTDQYIKKALSLLLNGKR.

It belongs to the RuvA family. Homotetramer. Forms an RuvA(8)-RuvB(12)-Holliday junction (HJ) complex. HJ DNA is sandwiched between 2 RuvA tetramers; dsDNA enters through RuvA and exits via RuvB. An RuvB hexamer assembles on each DNA strand where it exits the tetramer. Each RuvB hexamer is contacted by two RuvA subunits (via domain III) on 2 adjacent RuvB subunits; this complex drives branch migration. In the full resolvosome a probable DNA-RuvA(4)-RuvB(12)-RuvC(2) complex forms which resolves the HJ.

Its subcellular location is the cytoplasm. In terms of biological role, the RuvA-RuvB-RuvC complex processes Holliday junction (HJ) DNA during genetic recombination and DNA repair, while the RuvA-RuvB complex plays an important role in the rescue of blocked DNA replication forks via replication fork reversal (RFR). RuvA specifically binds to HJ cruciform DNA, conferring on it an open structure. The RuvB hexamer acts as an ATP-dependent pump, pulling dsDNA into and through the RuvAB complex. HJ branch migration allows RuvC to scan DNA until it finds its consensus sequence, where it cleaves and resolves the cruciform DNA. This is Holliday junction branch migration complex subunit RuvA from Bacillus cereus (strain G9842).